The sequence spans 95 residues: Aspartyl/glutamyl-tRNA(Asn/Gln) amidotransferase subunit C (95 aa).

Belongs to the GatC family. As to quaternary structure, heterotrimer of A, B and C subunits.

It carries out the reaction L-glutamyl-tRNA(Gln) + L-glutamine + ATP + H2O = L-glutaminyl-tRNA(Gln) + L-glutamate + ADP + phosphate + H(+). It catalyses the reaction L-aspartyl-tRNA(Asn) + L-glutamine + ATP + H2O = L-asparaginyl-tRNA(Asn) + L-glutamate + ADP + phosphate + 2 H(+). In terms of biological role, allows the formation of correctly charged Asn-tRNA(Asn) or Gln-tRNA(Gln) through the transamidation of misacylated Asp-tRNA(Asn) or Glu-tRNA(Gln) in organisms which lack either or both of asparaginyl-tRNA or glutaminyl-tRNA synthetases. The reaction takes place in the presence of glutamine and ATP through an activated phospho-Asp-tRNA(Asn) or phospho-Glu-tRNA(Gln). The sequence is that of Aspartyl/glutamyl-tRNA(Asn/Gln) amidotransferase subunit C from Pseudomonas entomophila (strain L48).